The chain runs to 636 residues: Protein SOSEKI 2 (636 aa).

The segment at 9–103 (HKIEVIYLLS…YVLKALEVMD (95 aa)) is DIX-like oligomerization domain. Disordered stretches follow at residues 164 to 188 (VHNN…SRVP), 281 to 304 (HGRL…TVDI), 340 to 393 (VEGS…TSAK), and 499 to 524 (LGSG…VSRP). Composition is skewed to polar residues over residues 375–390 (SSKS…TYET) and 499–510 (LGSGQASESFSP).

The protein belongs to the SOSEKI family. In terms of assembly, homodimer. Forms long polymer filaments with other SOKs proteins polymers crucial for polar localization and biological activity.

It is found in the cell membrane. SOSEKI proteins locally interpret global polarity cues and can influence cell division orientation to coordinate cell polarization relative to body axes. This Physcomitrium patens (Spreading-leaved earth moss) protein is Protein SOSEKI 2.